The primary structure comprises 236 residues: Purine nucleoside phosphorylase DeoD-type (236 aa).

His-5 is an a purine D-ribonucleoside binding site. Phosphate contacts are provided by residues Gly-21, Arg-25, Arg-44, and 88-91 (RVGT). Residues 180–182 (EME) and 204–205 (SD) each bind a purine D-ribonucleoside. Asp-205 functions as the Proton donor in the catalytic mechanism.

The protein belongs to the PNP/UDP phosphorylase family. In terms of assembly, homohexamer; trimer of homodimers.

It catalyses the reaction a purine D-ribonucleoside + phosphate = a purine nucleobase + alpha-D-ribose 1-phosphate. The enzyme catalyses a purine 2'-deoxy-D-ribonucleoside + phosphate = a purine nucleobase + 2-deoxy-alpha-D-ribose 1-phosphate. In terms of biological role, catalyzes the reversible phosphorolytic breakdown of the N-glycosidic bond in the beta-(deoxy)ribonucleoside molecules, with the formation of the corresponding free purine bases and pentose-1-phosphate. This Shewanella denitrificans (strain OS217 / ATCC BAA-1090 / DSM 15013) protein is Purine nucleoside phosphorylase DeoD-type.